Reading from the N-terminus, the 1072-residue chain is DNA-directed RNA polymerase subunit beta (1072 aa).

Belongs to the RNA polymerase beta chain family. In terms of assembly, in plastids the minimal PEP RNA polymerase catalytic core is composed of four subunits: alpha, beta, beta', and beta''. When a (nuclear-encoded) sigma factor is associated with the core the holoenzyme is formed, which can initiate transcription.

It is found in the plastid. It localises to the chloroplast. The catalysed reaction is RNA(n) + a ribonucleoside 5'-triphosphate = RNA(n+1) + diphosphate. DNA-dependent RNA polymerase catalyzes the transcription of DNA into RNA using the four ribonucleoside triphosphates as substrates. This is DNA-directed RNA polymerase subunit beta from Barbarea verna (Land cress).